The chain runs to 219 residues: DAN domain family member 5 (219 aa).

The signal sequence occupies residues 1–19 (MLLFRAASLLPLLCFTVGA). Intrachain disulfides connect Cys118-Cys165, Cys132-Cys179, Cys142-Cys195, and Cys146-Cys197. One can recognise a CTCK domain in the interval 118–198 (CHALPFIQNV…VELVEECECE (81 aa)).

It belongs to the DAN family. In terms of assembly, interacts with nr1-a.

The protein localises to the secreted. Plays an important role in regulating the left-right axis by blocking a tgfb1 cascade in the right posterior paraxial mesoderm. Functions as an inhibitor of bmp, tgfb1, nodal, activin and wnt signaling in the ectoderm. May inhibit mesodermal signals, probably through an inhibition of nodal/activin pathways. Seems to regulates cell fate specification and competence before the onset of neural induction. Expression in the entire ectodermal region prior to gastrulation might act to prevent fate specification in the ectoderm and ensure the maintenance of the stem-cell-like properties exhibited by ectodermal cells. This Xenopus tropicalis (Western clawed frog) protein is DAN domain family member 5 (dand5).